The following is an 861-amino-acid chain: Leucine--tRNA ligase (861 aa).

A 'HIGH' region motif is present at residues 42–52 (PYPSGRLHMGH). The 'KMSKS' region signature appears at 619-623 (KMSKS). Lysine 622 serves as a coordination point for ATP.

This sequence belongs to the class-I aminoacyl-tRNA synthetase family.

The protein resides in the cytoplasm. The enzyme catalyses tRNA(Leu) + L-leucine + ATP = L-leucyl-tRNA(Leu) + AMP + diphosphate. The sequence is that of Leucine--tRNA ligase from Haemophilus influenzae (strain 86-028NP).